The chain runs to 156 residues: Non-structural protein 2 (156 aa).

This sequence belongs to the pneumovirus non-structural protein 2 family.

The protein localises to the host cytoplasm. In terms of biological role, plays a major role in antagonizing the type I IFN-mediated antiviral response. May also inhibit viral transcription and RNA replication. The sequence is that of Non-structural protein 2 (1B) from Mus musculus (Mouse).